Here is a 659-residue protein sequence, read N- to C-terminus: DNA ligase (659 aa).

Residues 32–36 (DAEYD), 81–82 (SL), and Glu-110 contribute to the NAD(+) site. The active-site N6-AMP-lysine intermediate is the Lys-112. The NAD(+) site is built by Arg-133, Glu-168, Lys-284, and Lys-308. Zn(2+) is bound by residues Cys-402, Cys-405, Cys-420, and Cys-425. Residues 582–659 (AKPQIFAGKS…SEEEFAELLP (78 aa)) form the BRCT domain.

It belongs to the NAD-dependent DNA ligase family. LigA subfamily. Mg(2+) is required as a cofactor. The cofactor is Mn(2+).

The enzyme catalyses NAD(+) + (deoxyribonucleotide)n-3'-hydroxyl + 5'-phospho-(deoxyribonucleotide)m = (deoxyribonucleotide)n+m + AMP + beta-nicotinamide D-nucleotide.. Its function is as follows. DNA ligase that catalyzes the formation of phosphodiester linkages between 5'-phosphoryl and 3'-hydroxyl groups in double-stranded DNA using NAD as a coenzyme and as the energy source for the reaction. It is essential for DNA replication and repair of damaged DNA. In Desulfitobacterium hafniense (strain Y51), this protein is DNA ligase.